Consider the following 202-residue polypeptide: uncharacterized protein (202 aa).

Lys136 is covalently cross-linked (Isoglutamyl lysine isopeptide (Lys-Gln) (interchain with Q-Cter in protein Pup)).

This is an uncharacterized protein from Mycobacterium tuberculosis (strain CDC 1551 / Oshkosh).